The sequence spans 432 residues: MVIKGMRVGKYELGRTLGEGNSAKVKFAIDTLTGESFAIKIIEKSCITRLNVSFQIKREIRTLKVLKHPNIVRLHEVLASKTKIYMVLECVTGGDLFDRIVSKGKLSETQGRKMFQQLIDGVSYCHNKGVFHRDLKLENVLLDAKGHIKITDFGLSALSQHYREDGLLHTTCGSPNYVAPEVLANEGYDGAASDIWSCGVILYVILTGCLPFDDANLAVICRKIFKGDPPIPRWISLGAKTMIKRMLDPNPVTRVTIAGIKAHDWFKHDYTPSNYDDDDDVYLIQEDVFMMKEYEEEKSPDSPTIINAFQLIGMSSFLDLSGFFETEKLSERQIRFTSNSLAKDLLENIETIFTEMGFCLQKKHAKLKAIKEESTQKRQCGLSVTAEVFEISPSLNVVELRKSHGDSSLYKQLYERLLNELGSSSQVQELLA.

Residues 11-266 enclose the Protein kinase domain; it reads YELGRTLGEG…IAGIKAHDWF (256 aa). ATP-binding positions include 17–25 and lysine 40; that span reads LGEGNSAKV. Aspartate 134 functions as the Proton acceptor in the catalytic mechanism. The interval 152–181 is activation loop; it reads DFGLSALSQHYREDGLLHTTCGSPNYVAPE. Serine 156 carries the phosphoserine modification. Threonine 170 is subject to Phosphothreonine. The NAF domain occupies 301–325; sequence DSPTIINAFQLIGMSSFLDLSGFFE. The PPI stretch occupies residues 331 to 360; that stretch reads ERQIRFTSNSLAKDLLENIETIFTEMGFCL.

The protein belongs to the protein kinase superfamily. CAMK Ser/Thr protein kinase family. SNF1 subfamily. Interacts with CBL1. Mn(2+) is required as a cofactor.

The enzyme catalyses L-seryl-[protein] + ATP = O-phospho-L-seryl-[protein] + ADP + H(+). It carries out the reaction L-threonyl-[protein] + ATP = O-phospho-L-threonyl-[protein] + ADP + H(+). Functionally, CIPK serine-threonine protein kinases interact with CBL proteins. Binding of a CBL protein to the regulatory NAF domain of CIPK protein lead to the activation of the kinase in a calcium-dependent manner. The protein is CBL-interacting serine/threonine-protein kinase 17 (CIPK17) of Arabidopsis thaliana (Mouse-ear cress).